We begin with the raw amino-acid sequence, 287 residues long: ATP synthase gamma chain (287 aa).

This sequence belongs to the ATPase gamma chain family. In terms of assembly, F-type ATPases have 2 components, CF(1) - the catalytic core - and CF(0) - the membrane proton channel. CF(1) has five subunits: alpha(3), beta(3), gamma(1), delta(1), epsilon(1). CF(0) has three main subunits: a, b and c.

It is found in the cell inner membrane. Produces ATP from ADP in the presence of a proton gradient across the membrane. The gamma chain is believed to be important in regulating ATPase activity and the flow of protons through the CF(0) complex. The protein is ATP synthase gamma chain of Geotalea uraniireducens (strain Rf4) (Geobacter uraniireducens).